The chain runs to 385 residues: Lipid-A-disaccharide synthase (385 aa).

It belongs to the LpxB family.

The enzyme catalyses a lipid X + a UDP-2-N,3-O-bis[(3R)-3-hydroxyacyl]-alpha-D-glucosamine = a lipid A disaccharide + UDP + H(+). It functions in the pathway bacterial outer membrane biogenesis; LPS lipid A biosynthesis. Functionally, condensation of UDP-2,3-diacylglucosamine and 2,3-diacylglucosamine-1-phosphate to form lipid A disaccharide, a precursor of lipid A, a phosphorylated glycolipid that anchors the lipopolysaccharide to the outer membrane of the cell. This is Lipid-A-disaccharide synthase from Xylella fastidiosa (strain M23).